The sequence spans 494 residues: Guanosine-5'-triphosphate,3'-diphosphate pyrophosphatase (494 aa).

Belongs to the GppA/Ppx family. GppA subfamily.

The catalysed reaction is guanosine 3'-diphosphate 5'-triphosphate + H2O = guanosine 3',5'-bis(diphosphate) + phosphate + H(+). It functions in the pathway purine metabolism; ppGpp biosynthesis; ppGpp from GTP: step 2/2. Catalyzes the conversion of pppGpp to ppGpp. Guanosine pentaphosphate (pppGpp) is a cytoplasmic signaling molecule which together with ppGpp controls the 'stringent response', an adaptive process that allows bacteria to respond to amino acid starvation, resulting in the coordinated regulation of numerous cellular activities. In Escherichia coli (strain 55989 / EAEC), this protein is Guanosine-5'-triphosphate,3'-diphosphate pyrophosphatase.